The chain runs to 334 residues: Glyceraldehyde-3-phosphate dehydrogenase (334 aa).

Residues 12–13 and G111 each bind NAD(+); that span reads TI. 140–142 is a D-glyceraldehyde 3-phosphate binding site; that stretch reads SCN. C141 functions as the Nucleophile in the catalytic mechanism. Residue R167 participates in NAD(+) binding. Residue 192–193 participates in D-glyceraldehyde 3-phosphate binding; that stretch reads HG. Q298 provides a ligand contact to NAD(+).

The protein belongs to the glyceraldehyde-3-phosphate dehydrogenase family. In terms of assembly, homotetramer.

The protein resides in the cytoplasm. The enzyme catalyses D-glyceraldehyde 3-phosphate + phosphate + NADP(+) = (2R)-3-phospho-glyceroyl phosphate + NADPH + H(+). It carries out the reaction D-glyceraldehyde 3-phosphate + phosphate + NAD(+) = (2R)-3-phospho-glyceroyl phosphate + NADH + H(+). The protein operates within carbohydrate degradation; glycolysis; pyruvate from D-glyceraldehyde 3-phosphate: step 1/5. This Thermococcus sibiricus (strain DSM 12597 / MM 739) protein is Glyceraldehyde-3-phosphate dehydrogenase.